The following is a 63-amino-acid chain: Cecropin-1/3 (63 aa).

The signal sequence occupies residues methionine 1 to alanine 23. Residue arginine 62 is modified to Arginine amide.

The protein belongs to the cecropin family.

The protein resides in the secreted. Its function is as follows. Cecropins have lytic and antibacterial activity against several Gram-positive and Gram-negative bacteria. The protein is Cecropin-1/3 (Cec1) of Drosophila virilis (Fruit fly).